Consider the following 98-residue polypeptide: Large ribosomal subunit protein eL21 (98 aa).

Over residues 1–24 the composition is skewed to basic residues; the sequence is MVKKAHSFRRKTRGKLSKHPRRRG. A disordered region spans residues 1 to 27; sequence MVKKAHSFRRKTRGKLSKHPRRRGLPP.

The protein belongs to the eukaryotic ribosomal protein eL21 family. As to quaternary structure, part of the 50S ribosomal subunit.

The polypeptide is Large ribosomal subunit protein eL21 (Thermococcus kodakarensis (strain ATCC BAA-918 / JCM 12380 / KOD1) (Pyrococcus kodakaraensis (strain KOD1))).